The primary structure comprises 897 residues: Beta-galactosidase (897 aa).

The active-site Proton donor is the E459. E525 (nucleophile) is an active-site residue.

It belongs to the glycosyl hydrolase 2 family.

It carries out the reaction Hydrolysis of terminal non-reducing beta-D-galactose residues in beta-D-galactosides.. The polypeptide is Beta-galactosidase (cbgA) (Clostridium acetobutylicum).